The primary structure comprises 206 residues: Large ribosomal subunit protein bL25 (206 aa).

The protein belongs to the bacterial ribosomal protein bL25 family. CTC subfamily. In terms of assembly, part of the 50S ribosomal subunit; part of the 5S rRNA/L5/L18/L25 subcomplex. Contacts the 5S rRNA. Binds to the 5S rRNA independently of L5 and L18.

Its function is as follows. This is one of the proteins that binds to the 5S RNA in the ribosome where it forms part of the central protuberance. The chain is Large ribosomal subunit protein bL25 from Paraburkholderia phytofirmans (strain DSM 17436 / LMG 22146 / PsJN) (Burkholderia phytofirmans).